Reading from the N-terminus, the 257-residue chain is Zinc import ATP-binding protein ZnuC (257 aa).

Positions 5-220 constitute an ABC transporter domain; sequence ITLKNVAVNF…PEFIAMFGHH (216 aa). 37–44 lines the ATP pocket; it reads GPNGAGKS.

This sequence belongs to the ABC transporter superfamily. Zinc importer (TC 3.A.1.15.5) family. As to quaternary structure, the complex is composed of two ATP-binding proteins (ZnuC), two transmembrane proteins (ZnuB) and a solute-binding protein (ZnuA).

The protein localises to the cell inner membrane. The enzyme catalyses Zn(2+)(out) + ATP(in) + H2O(in) = Zn(2+)(in) + ADP(in) + phosphate(in) + H(+)(in). Part of the ABC transporter complex ZnuABC involved in zinc import. Responsible for energy coupling to the transport system. The protein is Zinc import ATP-binding protein ZnuC of Photorhabdus laumondii subsp. laumondii (strain DSM 15139 / CIP 105565 / TT01) (Photorhabdus luminescens subsp. laumondii).